Reading from the N-terminus, the 175-residue chain is Cuticle protein 16.5, isoform A (175 aa).

19 consecutive repeat copies span residues 17–20 (AAPA), 25–28 (AAPA), 31–34 (AAPA), 38–41 (AAPA), 44–47 (AAPA), 51–54 (AAPA), 57–60 (AAPA), 64–67 (AAPA), 70–73 (AAPA), 77–80 (AAPA), 83–86 (AAPA), 91–94 (AAPA), 99–102 (AAPA), 106–109 (AAPA), 134–137 (AAPA), 144–147 (AAPA), 151–154 (AAPA), 158–161 (AAPA), and 165–168 (AAPA).

Its function is as follows. Component of the cuticle of migratory locust which contains more than 100 different structural proteins. This Locusta migratoria (Migratory locust) protein is Cuticle protein 16.5, isoform A.